The chain runs to 96 residues: UPF0213 protein BCE_0033 (96 aa).

One can recognise a GIY-YIG domain in the interval 4 to 79 (NKHCFYVVEC…KQLNRKQKEE (76 aa)).

It belongs to the UPF0213 family.

The sequence is that of UPF0213 protein BCE_0033 from Bacillus cereus (strain ATCC 10987 / NRS 248).